The chain runs to 258 residues: Adenylate kinase (258 aa).

52–57 is a binding site for ATP; it reads GAGKGT. The tract at residues 72–101 is NMP; that stretch reads ATGDMLRSQVAKKTALGKEAKKIMDQGGLV. Residues threonine 73, arginine 78, 99–101, 128–131, and glutamine 135 each bind AMP; these read GLV and GFPR. Residues 169 to 206 are LID; it reads GRLVHPASGRSYHKIFNPPKEEMKDDVTGEPLIQRSDD. ATP-binding positions include arginine 170 and 179–180; that span reads SY. Arginine 203 and arginine 214 together coordinate AMP. Glutamine 242 is a binding site for ATP.

The protein belongs to the adenylate kinase family. AK2 subfamily. As to quaternary structure, monomer.

The protein localises to the cytoplasm. It localises to the cytosol. The protein resides in the mitochondrion intermembrane space. It carries out the reaction AMP + ATP = 2 ADP. Its function is as follows. Catalyzes the reversible transfer of the terminal phosphate group between ATP and AMP. Plays an important role in cellular energy homeostasis and in adenine nucleotide metabolism. Adenylate kinase activity is critical for regulation of the phosphate utilization and the AMP de novo biosynthesis pathways. The polypeptide is Adenylate kinase (adk1) (Aspergillus niger (strain ATCC MYA-4892 / CBS 513.88 / FGSC A1513)).